The chain runs to 356 residues: Peptide chain release factor 1 (356 aa).

N5-methylglutamine is present on glutamine 233.

It belongs to the prokaryotic/mitochondrial release factor family. Post-translationally, methylated by PrmC. Methylation increases the termination efficiency of RF1.

It localises to the cytoplasm. Peptide chain release factor 1 directs the termination of translation in response to the peptide chain termination codons UAG and UAA. This chain is Peptide chain release factor 1, found in Bacillus licheniformis (strain ATCC 14580 / DSM 13 / JCM 2505 / CCUG 7422 / NBRC 12200 / NCIMB 9375 / NCTC 10341 / NRRL NRS-1264 / Gibson 46).